The primary structure comprises 468 residues: MSLNGFYLLPHPPIVVPEVGRGEEKKIENTTKSFEAIAKDIAGKAPNTIIIVTPHGTMFQDYIALAYEDEISGSFKDFRAPNVSMELKINKELTSKIYELAYGERIPSVMATNDILKKYNTSVFLDHGCMVPLYFINKYYKEYKIVHITYAALSDIELYRFGMNVTKAVEELNENAVFIASGDLSHRLREDGPYGYNPAGEKFDKELLNNLKDGNVEGVFSIDKDTVYNAGECGRRSVAVLLGTLEGKKFKGEILSYEGTFGVGYGVMKLEAFSNDTSKLKELERIRKDEYESKKQEKDPYVKLARESLTQYLTTGEAIEEIPDYVTEEMRDLKRGVFVSLKKFGDLRGCIGTIFPVTDNIAEEIIRNAIEAGLNDPRFYEVGKDELVDIDFSVDVLDEPESATREELDPKKYGVIVTHGRKKGLLLPNLEGVNTVEEQLEIALEKADIDSHEDYTIEKFMVTRHKES.

Positions 1-289 are unknown; it reads MSLNGFYLLP…LKELERIRKD (289 aa). The 173-residue stretch at 296 to 468 folds into the AMMECR1 domain; it reads QEKDPYVKLA…KFMVTRHKES (173 aa).

This Clostridium acetobutylicum (strain ATCC 824 / DSM 792 / JCM 1419 / IAM 19013 / LMG 5710 / NBRC 13948 / NRRL B-527 / VKM B-1787 / 2291 / W) protein is Protein CA_C1420.